The chain runs to 108 residues: Glutaredoxin-1 (108 aa).

Residues 3–106 (EEFVQQRLAN…DILLSIGVLR (104 aa)) form the Glutaredoxin domain. Cysteines 23 and 26 form a disulfide.

The protein belongs to the glutaredoxin family.

Its subcellular location is the virion. Its function is as follows. Displays thioltransferase and dehydroascorbate reductase activities. This is Glutaredoxin-1 (OPG075) from Cynomys gunnisoni (Gunnison's prairie dog).